We begin with the raw amino-acid sequence, 298 residues long: Thymidylate synthase (298 aa).

DUMP-binding positions include arginine 25 and 159 to 160 (RR). The active-site Nucleophile is the cysteine 179. DUMP-binding positions include 200 to 203 (RSVD), asparagine 211, and 241 to 243 (HLY). Aspartate 203 contributes to the (6R)-5,10-methylene-5,6,7,8-tetrahydrofolate binding site. A (6R)-5,10-methylene-5,6,7,8-tetrahydrofolate-binding site is contributed by alanine 297.

Belongs to the thymidylate synthase family. Bacterial-type ThyA subfamily. As to quaternary structure, homodimer.

Its subcellular location is the cytoplasm. It carries out the reaction dUMP + (6R)-5,10-methylene-5,6,7,8-tetrahydrofolate = 7,8-dihydrofolate + dTMP. It functions in the pathway pyrimidine metabolism; dTTP biosynthesis. Catalyzes the reductive methylation of 2'-deoxyuridine-5'-monophosphate (dUMP) to 2'-deoxythymidine-5'-monophosphate (dTMP) while utilizing 5,10-methylenetetrahydrofolate (mTHF) as the methyl donor and reductant in the reaction, yielding dihydrofolate (DHF) as a by-product. This enzymatic reaction provides an intracellular de novo source of dTMP, an essential precursor for DNA biosynthesis. The chain is Thymidylate synthase from Cereibacter sphaeroides (strain ATCC 17023 / DSM 158 / JCM 6121 / CCUG 31486 / LMG 2827 / NBRC 12203 / NCIMB 8253 / ATH 2.4.1.) (Rhodobacter sphaeroides).